A 316-amino-acid chain; its full sequence is E3 ubiquitin-protein ligase rnf146 (316 aa).

The RING-type zinc finger occupies 36–74; the sequence is CAICLQTCVHPVSLPCKHIFCYLCVKGASWLGRRCALCR. Residues 91-167 form the WWE domain; it reads EELKSASRGN…EHGRRRKIKR (77 aa). The a glycoprotein site is built by tyrosine 107, arginine 110, tryptophan 114, tyrosine 144, glutamine 153, arginine 163, and lysine 175. A disordered region spans residues 257 to 316; the sequence is GRNNIGEGEEGQPLINARMPAPSALLEESEPSDSNDHGSPTLQHNSLLVPQSNRLPFGNP. Residues 293-310 show a composition bias toward polar residues; sequence HGSPTLQHNSLLVPQSNR.

It localises to the cytoplasm. Its subcellular location is the cytosol. The protein localises to the nucleus. It catalyses the reaction S-ubiquitinyl-[E2 ubiquitin-conjugating enzyme]-L-cysteine + [acceptor protein]-L-lysine = [E2 ubiquitin-conjugating enzyme]-L-cysteine + N(6)-ubiquitinyl-[acceptor protein]-L-lysine.. Its pathway is protein modification; protein ubiquitination. In terms of biological role, E3 ubiquitin-protein ligase that specifically binds poly-ADP-ribosylated proteins and mediates their ubiquitination and subsequent degradation. May regulate many important biological processes, such as cell survival and DNA damage response. Acts as an activator of the Wnt signaling pathway by mediating the ubiquitination of poly-ADP-ribosylated proteins. Neuroprotective protein. Protects against cell death induced by DNA damaging agents and rescues cells from G1 arrest. Promotes cell survival after gamma-irradiation. Facilitates DNA repair. This Xenopus tropicalis (Western clawed frog) protein is E3 ubiquitin-protein ligase rnf146 (rnf146).